Here is a 402-residue protein sequence, read N- to C-terminus: Argininosuccinate synthase (402 aa).

ATP-binding positions include 13-21 (AYSGGLDTS) and Ala40. Positions 91 and 96 each coordinate L-citrulline. Gly121 serves as a coordination point for ATP. L-aspartate contacts are provided by Thr123, Asn127, and Asp128. L-citrulline is bound at residue Asn127. Positions 131, 180, 189, 265, and 277 each coordinate L-citrulline.

It belongs to the argininosuccinate synthase family. Type 1 subfamily. As to quaternary structure, homotetramer.

It localises to the cytoplasm. It carries out the reaction L-citrulline + L-aspartate + ATP = 2-(N(omega)-L-arginino)succinate + AMP + diphosphate + H(+). It functions in the pathway amino-acid biosynthesis; L-arginine biosynthesis; L-arginine from L-ornithine and carbamoyl phosphate: step 2/3. The protein is Argininosuccinate synthase of Leptospira biflexa serovar Patoc (strain Patoc 1 / Ames).